The primary structure comprises 527 residues: DNA polymerase epsilon subunit 2 (527 aa).

The protein belongs to the DNA polymerase epsilon subunit B family. Component of the DNA polymerase epsilon complex consisting of four subunits: the catalytic subunit POLE and the accessory subunits POLE2, POLE3 and POLE4.

It is found in the nucleus. Accessory component of the DNA polymerase epsilon complex. Participates in DNA repair and in chromosomal DNA replication. This Bos taurus (Bovine) protein is DNA polymerase epsilon subunit 2 (POLE2).